The primary structure comprises 56 residues: Alpha-conotoxin TxIA (56 aa).

The first 16 residues, 1–16, serve as a signal peptide directing secretion; that stretch reads MFTVFLLVVLATAVVS. The propeptide occupies 17–39; that stretch reads FTSDRASDDGKAAASDLITLTIK. 2 disulfides stabilise this stretch: Cys-41–Cys-47 and Cys-42–Cys-55. Positions 43–45 are ser-Xaa-Pro motif, crucial for potent interaction with nAChR; sequence SRP. Residues Pro-45 and Pro-46 each carry the 4-hydroxyproline; partial modification. Residue Cys-55 is modified to Cysteine amide.

It belongs to the conotoxin A superfamily. Post-translationally, exists in 4 different forms, depending on hydroxylations. Tx1a-PP does not contain hydroxyproline, tx1a-OP has one hydroxyproline at position 45, tx1a-PO has one hydroxyproline at position 46, and tx1a-PP has two hydroxyprolines at positions 45 and 46. As to expression, expressed by the venom duct. Tx1a that containing 1 or 2 non-hydroxylated prolines are mostly present in part 5 of the venom duct (distal part near the pharynx), whereas tx1a-OO (with 2 hydroxyprolines) is mostly present in part 4 of the venom duct (follewed by part 3).

The protein localises to the secreted. Its function is as follows. Alpha-conotoxins act on postsynaptic membranes, they bind to the nicotinic acetylcholine receptors (nAChR) and thus inhibit them. This toxin inhibits rat alpha-3-beta-2/CHRNA3-CHRNB2 (IC(50)=3.5 nM), rat alpha-7/CHRNA7 (IC(50)=392 nM) nAChR, and the L.stagnalis soluble acetylcholine receptor (all tested without hydroxyproline). In Conus textile (Cloth-of-gold cone), this protein is Alpha-conotoxin TxIA.